Here is a 268-residue protein sequence, read N- to C-terminus: Photosystem II 22 kDa protein 1, chloroplastic (268 aa).

The transit peptide at 1–60 directs the protein to the chloroplast; the sequence is MAQSMLVSGANGTVAAASTSRLQPVRPTPFSRLVLSQPSSSLGRAVSVKTVALFGRSKTK. 2 consecutive repeat copies span residues 54–161 and 164–268. Helical transmembrane passes span 99–119, 133–153, 199–219, and 234–254; these read VAML…KGIL, AEPL…GALG, LFVG…EIIT, and PINE…IAAI.

The protein belongs to the ELIP/psbS family. Expressed at low levels in leaves (at protein level).

It is found in the plastid. Its subcellular location is the chloroplast thylakoid membrane. Involved in high light-mediated energy-dependent nonphotochemical quenching (NPQ, qE) and thermal dissipation (TD) thus regulating energy conversion in photosystem II and protecting from photoinhibition. Also seems to regulate quantum yield of electron transport in fluctuating light conditions. The protein is Photosystem II 22 kDa protein 1, chloroplastic of Oryza sativa subsp. indica (Rice).